Reading from the N-terminus, the 313-residue chain is Protein-methionine-sulfoxide reductase catalytic subunit MsrP (313 aa).

A signal peptide (tat-type signal) is located at residues 1–46 (MPSYRAPKIAAAEITPERFFLDRRTFIAAAAGSLALSVPKPSRAAA). Mo-molybdopterin is bound by residues Asn70, 73–74 (YE), Cys127, Thr162, Asn212, Arg217, and 228–230 (GIK).

This sequence belongs to the MsrP family. In terms of assembly, heterodimer of a catalytic subunit (MsrP) and a heme-binding subunit (MsrQ). Mo-molybdopterin serves as cofactor. In terms of processing, predicted to be exported by the Tat system. The position of the signal peptide cleavage has not been experimentally proven.

The protein resides in the periplasm. The enzyme catalyses L-methionyl-[protein] + a quinone + H2O = L-methionyl-(S)-S-oxide-[protein] + a quinol. It catalyses the reaction L-methionyl-[protein] + a quinone + H2O = L-methionyl-(R)-S-oxide-[protein] + a quinol. Functionally, part of the MsrPQ system that repairs oxidized periplasmic proteins containing methionine sulfoxide residues (Met-O), using respiratory chain electrons. Thus protects these proteins from oxidative-stress damage caused by reactive species of oxygen and chlorine generated by the host defense mechanisms. MsrPQ is essential for the maintenance of envelope integrity under bleach stress, rescuing a wide series of structurally unrelated periplasmic proteins from methionine oxidation. The catalytic subunit MsrP is non-stereospecific, being able to reduce both (R-) and (S-) diastereoisomers of methionine sulfoxide. The sequence is that of Protein-methionine-sulfoxide reductase catalytic subunit MsrP from Rhizobium meliloti (strain 1021) (Ensifer meliloti).